Consider the following 84-residue polypeptide: Toxin Cex12 (84 aa).

The first 19 residues, 1–19, serve as a signal peptide directing secretion; sequence MNSLLMITTCLILVGTVWA. The LCN-type CS-alpha/beta domain maps to 20-83; that stretch reads NDGYLFDKRK…ISRTPGKTCR (64 aa). Intrachain disulfides connect C31/C82, C35/C58, C44/C63, and C48/C65.

The protein belongs to the long (4 C-C) scorpion toxin superfamily. Sodium channel inhibitor family. Beta subfamily. Expressed by the venom gland.

It localises to the secreted. Its function is as follows. Beta toxins bind voltage-independently at site-4 of sodium channels (Nav) and shift the voltage of activation toward more negative potentials thereby affecting sodium channel activation and promoting spontaneous and repetitive firing. This chain is Toxin Cex12, found in Centruroides exilicauda (Bark scorpion).